A 112-amino-acid chain; its full sequence is Large ribosomal subunit protein bL17 (112 aa).

The protein belongs to the bacterial ribosomal protein bL17 family. As to quaternary structure, part of the 50S ribosomal subunit. Contacts protein L32.

The polypeptide is Large ribosomal subunit protein bL17 (Heliobacterium modesticaldum (strain ATCC 51547 / Ice1)).